The sequence spans 209 residues: Large ribosomal subunit protein uL3 (209 aa).

It belongs to the universal ribosomal protein uL3 family. As to quaternary structure, part of the 50S ribosomal subunit. Forms a cluster with proteins L14 and L19.

Functionally, one of the primary rRNA binding proteins, it binds directly near the 3'-end of the 23S rRNA, where it nucleates assembly of the 50S subunit. The chain is Large ribosomal subunit protein uL3 from Carboxydothermus hydrogenoformans (strain ATCC BAA-161 / DSM 6008 / Z-2901).